Here is a 794-residue protein sequence, read N- to C-terminus: FT-interacting protein 1 (794 aa).

The segment covering 1-27 has biased composition (basic and acidic residues); sequence MAAKDGAKSQEDYKLKDMKPELGERWP. Positions 1 to 34 are disordered; it reads MAAKDGAKSQEDYKLKDMKPELGERWPHGGQRGG. C2 domains lie at 37 to 158, 198 to 321, and 364 to 492; these read WIGS…PQWY, VQGE…SKWY, and YISD…THSY. Ca(2+) contacts are provided by Asp-76, Asp-123, Glu-125, and Glu-131. The next 4 membrane-spanning stretches (helical) occupy residues 510–532, 595–615, 619–639, and 737–757; these read LAVR…PLLP, IVSV…VCYW, LTTI…ELIL, and LFVI…FKII.

Belongs to the MCTP family. In terms of assembly, interacts with FT in phloem companion cells. The cofactor is Ca(2+). Expressed in the vascular tissues of roots, cotyledons and rosette leaves. Specifically located in the phloem including companion cells. Observed in flowers. Not detected in the shoot apical meristem.

The protein resides in the endoplasmic reticulum membrane. It is found in the cell junction. The protein localises to the plasmodesma. Functionally, involved in the export of FT from the phloem companion cells to the sieve elements through the plasmodesmata. Regulates flowering time under long days. May function as a signaling molecule by regulating the trafficking of other regulators. In Arabidopsis thaliana (Mouse-ear cress), this protein is FT-interacting protein 1.